Consider the following 54-residue polypeptide: Large ribosomal subunit protein bL33 (54 aa).

The protein belongs to the bacterial ribosomal protein bL33 family.

The chain is Large ribosomal subunit protein bL33 from Thermobifida fusca (strain YX).